The primary structure comprises 240 residues: Flagellar L-ring protein (240 aa).

Positions 1 to 20 are cleaved as a signal peptide; it reads MIRNFLLFFMPIYAILFLSG. Cysteine 21 is lipidated: N-palmitoyl cysteine. A lipid anchor (S-diacylglycerol cysteine) is attached at cysteine 21.

Belongs to the FlgH family. As to quaternary structure, the basal body constitutes a major portion of the flagellar organelle and consists of four rings (L,P,S, and M) mounted on a central rod.

It localises to the cell outer membrane. Its subcellular location is the bacterial flagellum basal body. Assembles around the rod to form the L-ring and probably protects the motor/basal body from shearing forces during rotation. The polypeptide is Flagellar L-ring protein (Sulfurimonas denitrificans (strain ATCC 33889 / DSM 1251) (Thiomicrospira denitrificans (strain ATCC 33889 / DSM 1251))).